The primary structure comprises 131 residues: Large ribosomal subunit protein bL17 (131 aa).

It belongs to the bacterial ribosomal protein bL17 family. In terms of assembly, part of the 50S ribosomal subunit. Contacts protein L32.

This Nitrosospira multiformis (strain ATCC 25196 / NCIMB 11849 / C 71) protein is Large ribosomal subunit protein bL17.